The chain runs to 220 residues: 7-cyano-7-deazaguanine synthase (220 aa).

Residue 10 to 20 (FSGGQDSTTCL) participates in ATP binding. Residues Cys-186, Cys-195, Cys-198, and Cys-201 each coordinate Zn(2+).

The protein belongs to the QueC family. In terms of assembly, homodimer. It depends on Zn(2+) as a cofactor.

The catalysed reaction is 7-carboxy-7-deazaguanine + NH4(+) + ATP = 7-cyano-7-deazaguanine + ADP + phosphate + H2O + H(+). It participates in purine metabolism; 7-cyano-7-deazaguanine biosynthesis. Its function is as follows. Catalyzes the ATP-dependent conversion of 7-carboxy-7-deazaguanine (CDG) to 7-cyano-7-deazaguanine (preQ(0)). In Bacillus cereus (strain ATCC 14579 / DSM 31 / CCUG 7414 / JCM 2152 / NBRC 15305 / NCIMB 9373 / NCTC 2599 / NRRL B-3711), this protein is 7-cyano-7-deazaguanine synthase.